The sequence spans 262 residues: Tryptophan synthase alpha chain (262 aa).

Residues E49 and D60 each act as proton acceptor in the active site.

This sequence belongs to the TrpA family. As to quaternary structure, tetramer of two alpha and two beta chains.

It catalyses the reaction (1S,2R)-1-C-(indol-3-yl)glycerol 3-phosphate + L-serine = D-glyceraldehyde 3-phosphate + L-tryptophan + H2O. It participates in amino-acid biosynthesis; L-tryptophan biosynthesis; L-tryptophan from chorismate: step 5/5. Functionally, the alpha subunit is responsible for the aldol cleavage of indoleglycerol phosphate to indole and glyceraldehyde 3-phosphate. The sequence is that of Tryptophan synthase alpha chain from Caldanaerobacter subterraneus subsp. tengcongensis (strain DSM 15242 / JCM 11007 / NBRC 100824 / MB4) (Thermoanaerobacter tengcongensis).